The sequence spans 237 residues: Protein FEV (237 aa).

The ETS DNA-binding region spans 47–127; it reads IQLWQFLLEL…HGKRYAYRFD (81 aa). The tract at residues 129 to 237 is may mediate active transcriptional repression; it reads QGLAQACQPP…AASHLGGHYH (109 aa).

It belongs to the ETS family. In terms of tissue distribution, expressed in central serotonergic neurons.

The protein localises to the nucleus. In terms of biological role, functions as a transcriptional regulator. May function as a transcriptional repressor. Functions in the differentiation and the maintenance of the central serotonergic neurons. May play a role in cell growth. The protein is Protein FEV (Fev) of Mus musculus (Mouse).